A 316-amino-acid polypeptide reads, in one-letter code: Methionyl-tRNA formyltransferase (316 aa).

A (6S)-5,6,7,8-tetrahydrofolate-binding site is contributed by 111 to 114; that stretch reads GLLP.

Belongs to the Fmt family.

It catalyses the reaction L-methionyl-tRNA(fMet) + (6R)-10-formyltetrahydrofolate = N-formyl-L-methionyl-tRNA(fMet) + (6S)-5,6,7,8-tetrahydrofolate + H(+). Attaches a formyl group to the free amino group of methionyl-tRNA(fMet). The formyl group appears to play a dual role in the initiator identity of N-formylmethionyl-tRNA by promoting its recognition by IF2 and preventing the misappropriation of this tRNA by the elongation apparatus. This chain is Methionyl-tRNA formyltransferase, found in Chlamydia trachomatis serovar A (strain ATCC VR-571B / DSM 19440 / HAR-13).